A 132-amino-acid chain; its full sequence is Phosphoribosyl-AMP cyclohydrolase (132 aa).

A Mg(2+)-binding site is contributed by Asp-78. Cys-79 lines the Zn(2+) pocket. Asp-80 and Asp-82 together coordinate Mg(2+). Zn(2+) contacts are provided by Cys-96 and Cys-103.

It belongs to the PRA-CH family. Homodimer. Requires Mg(2+) as cofactor. Zn(2+) serves as cofactor.

Its subcellular location is the cytoplasm. It carries out the reaction 1-(5-phospho-beta-D-ribosyl)-5'-AMP + H2O = 1-(5-phospho-beta-D-ribosyl)-5-[(5-phospho-beta-D-ribosylamino)methylideneamino]imidazole-4-carboxamide. Its pathway is amino-acid biosynthesis; L-histidine biosynthesis; L-histidine from 5-phospho-alpha-D-ribose 1-diphosphate: step 3/9. Its function is as follows. Catalyzes the hydrolysis of the adenine ring of phosphoribosyl-AMP. This is Phosphoribosyl-AMP cyclohydrolase from Nitrosococcus oceani (strain ATCC 19707 / BCRC 17464 / JCM 30415 / NCIMB 11848 / C-107).